The primary structure comprises 485 residues: Glutamyl-tRNA(Gln) amidotransferase subunit A (485 aa).

Active-site charge relay system residues include Lys79 and Ser154. Ser178 functions as the Acyl-ester intermediate in the catalytic mechanism.

The protein belongs to the amidase family. GatA subfamily. In terms of assembly, heterotrimer of A, B and C subunits.

The catalysed reaction is L-glutamyl-tRNA(Gln) + L-glutamine + ATP + H2O = L-glutaminyl-tRNA(Gln) + L-glutamate + ADP + phosphate + H(+). In terms of biological role, allows the formation of correctly charged Gln-tRNA(Gln) through the transamidation of misacylated Glu-tRNA(Gln) in organisms which lack glutaminyl-tRNA synthetase. The reaction takes place in the presence of glutamine and ATP through an activated gamma-phospho-Glu-tRNA(Gln). This chain is Glutamyl-tRNA(Gln) amidotransferase subunit A, found in Staphylococcus carnosus (strain TM300).